A 139-amino-acid polypeptide reads, in one-letter code: Putative pre-16S rRNA nuclease (139 aa).

The protein belongs to the YqgF nuclease family.

It is found in the cytoplasm. In terms of biological role, could be a nuclease involved in processing of the 5'-end of pre-16S rRNA. In Streptococcus pyogenes serotype M1, this protein is Putative pre-16S rRNA nuclease.